A 214-amino-acid chain; its full sequence is Adenylate kinase (214 aa).

10 to 15 is a binding site for ATP; the sequence is GAGKGT. The interval 30–59 is NMP; the sequence is STGDMFRDHKARGTELGKTVQAIMDAGGLV. Residues T31, R36, 57-59, 85-88, and Q92 each bind AMP; these read GLV and GYPR. The segment at 126-163 is LID; it reads GRRSCPKCGAVYHVSANPPRRMGYCDRDDAGLVQRDDD. Residue R127 coordinates ATP. Zn(2+) is bound by residues C130 and C133. An ATP-binding site is contributed by 136 to 137; sequence VY. 2 residues coordinate Zn(2+): C150 and D153. Positions 160 and 171 each coordinate AMP. G199 is a binding site for ATP.

It belongs to the adenylate kinase family. In terms of assembly, monomer.

It localises to the cytoplasm. The catalysed reaction is AMP + ATP = 2 ADP. Its pathway is purine metabolism; AMP biosynthesis via salvage pathway; AMP from ADP: step 1/1. Its function is as follows. Catalyzes the reversible transfer of the terminal phosphate group between ATP and AMP. Plays an important role in cellular energy homeostasis and in adenine nucleotide metabolism. The polypeptide is Adenylate kinase (Anaeromyxobacter sp. (strain Fw109-5)).